Reading from the N-terminus, the 136-residue chain is Urease subunit beta (136 aa).

Residues 112-136 are disordered; sequence ENDEYAGVFGDNGTENVNKKGGKRS.

The protein belongs to the urease beta subunit family. In terms of assembly, heterotrimer of UreA (gamma), UreB (beta) and UreC (alpha) subunits. Three heterotrimers associate to form the active enzyme.

It is found in the cytoplasm. The catalysed reaction is urea + 2 H2O + H(+) = hydrogencarbonate + 2 NH4(+). It participates in nitrogen metabolism; urea degradation; CO(2) and NH(3) from urea (urease route): step 1/1. This chain is Urease subunit beta, found in Staphylococcus aureus (strain MRSA252).